A 358-amino-acid polypeptide reads, in one-letter code: Aminomethyltransferase (358 aa).

It belongs to the GcvT family. As to quaternary structure, the glycine cleavage system is composed of four proteins: P, T, L and H.

The enzyme catalyses N(6)-[(R)-S(8)-aminomethyldihydrolipoyl]-L-lysyl-[protein] + (6S)-5,6,7,8-tetrahydrofolate = N(6)-[(R)-dihydrolipoyl]-L-lysyl-[protein] + (6R)-5,10-methylene-5,6,7,8-tetrahydrofolate + NH4(+). Functionally, the glycine cleavage system catalyzes the degradation of glycine. The chain is Aminomethyltransferase from Francisella philomiragia subsp. philomiragia (strain ATCC 25017 / CCUG 19701 / FSC 153 / O#319-036).